The following is a 607-amino-acid chain: MDNEQRLKRRENIRNFSIIAHIDHGKSTLADRILENTKSVETRDMQDQLLDSMDLERERGITIKLNAVRLKYEAKDGNTYTFHLIDTPGHVDFTYEVSRSLAACEGAILVVDAAQGIEAQTLANVYLALDNELELLPVINKIDLPAAEPERVKQEIEDMIGLDQDDVVLASAKSNIGIEEILEKIVEVVPAPDGDPEAPLKALIFDSEYDPYRGVISSIRIVDGVVKAGDKIRMMATGKEFEVTEVGINTPKQLPVDELTVGDVGYIIASIKNVDDSRVGDTITLASRPASEPLQGYKKMNPMVYCGLFPIDNKNYNDLREALEKLQLNDASLEFEPESSQALGFGYRTGFLGMLHMEIIQERIEREFGIELIATAPSVIYQCILRDGSEVTVDNPAQMPDRDKIDKIFEPYVRATMMVPNDYVGAVMELCQRKRGQFINMDYLDDIRVNIVYELPLAEVVFDFFDQLKSNTKGYASFDYEFIENKESNLVKMDILLNGDKVDALSFIVHRDFAYERGKALVEKLKTLIPRQQFEVPVQAAIGQKIVARTNIKSMGKNVLAKCYGGDISRKRKLLEKQKAGKAKMKAVGNIEIPQDAFLAVLKMDDE.

Residues 11-193 form the tr-type G domain; sequence ENIRNFSIIA…KIVEVVPAPD (183 aa). GTP-binding positions include 23–28 and 140–143; these read DHGKST and NKID.

Belongs to the TRAFAC class translation factor GTPase superfamily. Classic translation factor GTPase family. LepA subfamily.

The protein localises to the cell membrane. The enzyme catalyses GTP + H2O = GDP + phosphate + H(+). Required for accurate and efficient protein synthesis under certain stress conditions. May act as a fidelity factor of the translation reaction, by catalyzing a one-codon backward translocation of tRNAs on improperly translocated ribosomes. Back-translocation proceeds from a post-translocation (POST) complex to a pre-translocation (PRE) complex, thus giving elongation factor G a second chance to translocate the tRNAs correctly. Binds to ribosomes in a GTP-dependent manner. In Staphylococcus aureus (strain MW2), this protein is Elongation factor 4.